Here is a 799-residue protein sequence, read N- to C-terminus: Oligopeptide transporter 1 (799 aa).

Disordered stretches follow at residues 1–26 (MSTI…PIQI) and 43–64 (DVNN…QKFD). The Extracellular segment spans residues 1-108 (MSTIYRESDS…DPTIRLNHWR (108 aa)). The segment covering 13-26 (SEPSPTPTTIPIQI) has biased composition (low complexity). An N-linked (GlcNAc...) asparagine glycan is attached at asparagine 46. Threonine 48, threonine 50, and threonine 51 each carry phosphothreonine. A helical membrane pass occupies residues 109 to 129 (TWFLTTVFVVVFAGVNQFFSL). The Cytoplasmic segment spans residues 130-135 (RYPSLE). The helical transmembrane segment at 136 to 156 (INFLVAQVVCYPIGRILALLP) threads the bilayer. Residues 157–177 (DWKCSKVPFFDLNPGPFTKKE) lie on the Extracellular side of the membrane. Residues 178–198 (HAVVTIAVALTSSTAYAMYIL) form a helical membrane-spanning segment. The Cytoplasmic portion of the chain corresponds to 199–210 (NAQGSFYNMKLN). The helical transmembrane segment at 211 to 231 (VGYQFLLVWTSQMIGYGAAGL) threads the bilayer. At 232-276 (TRRWVVNPASSIWPQTLISVSLFDSLHSRKVEKTVANGWTMPRYR) the chain is on the extracellular side. Residues 277 to 297 (FFLIVLIGSFIWYWVPGFLFT) traverse the membrane as a helical segment. The Cytoplasmic portion of the chain corresponds to 298–313 (GLSYFNVILWGSKTRH). A helical transmembrane segment spans residues 314-334 (NFIANTIFGTQSGLGALPITF). The Extracellular segment spans residues 335–359 (DYTQVSQAMSGSVFATPFYVSANTY). A helical membrane pass occupies residues 360 to 380 (ASVLIFFVIVLPCLYFTNTWY). Residues 381-428 (AKYMPVISGSTYDNTQNKYNVTKILNEDYSINLEKYKEYSPVFVPFSY) are Cytoplasmic-facing. A helical transmembrane segment spans residues 429-449 (LLSYALNFAAVIAVFVHCILY). At 450 to 482 (HGKDIVAKFKDRKNGGTDIHMRIYSKNYKDCPD) the chain is on the extracellular side. Residues 483 to 503 (WWYLLLQIVMIGLGFVAVCCF) form a helical membrane-spanning segment. Over 504–508 (DTKFP) the chain is Cytoplasmic. Residues 509–529 (AWAFVIAILISLVNFIPQGIL) form a helical membrane-spanning segment. At 530–540 (EAMTNQHVGLN) the chain is on the extracellular side. A helical transmembrane segment spans residues 541-561 (IITELICGYMLPLRPMANLLF). The Cytoplasmic segment spans residues 562–590 (KLYGFIVMRQGLNLSRDLKLAMYMKVSPR). A helical membrane pass occupies residues 591–611 (LIFAVQIYATIISGMVNVGVQ). The Extracellular segment spans residues 612-659 (EWMMHNIDGLCTTDQPNGFTCANGRTVFNASIIWSLPKYLFSSGRIYN). A glycan (N-linked (GlcNAc...) asparagine) is linked at asparagine 640. A helical transmembrane segment spans residues 660-680 (PLMWFFLIGLLFPLAVYAVQW). The Cytoplasmic portion of the chain corresponds to 681-736 (KFPKFKFAKHIHTPVFFTGPGNIPPSTPYNYSLFFAMSFCLNLIRKRWRAWFNKYN). The helical transmembrane segment at 737 to 757 (FVMGAGVEAGVAISVVIIFLC) threads the bilayer. The Extracellular portion of the chain corresponds to 758–799 (VQYPGGKLSWWGNNVWKRTYDNDYKKFYTLKKGETFGYDKWW).

This sequence belongs to the oligopeptide OPT transporter family.

It localises to the cell membrane. High affinity transporter for glutathione. Also transports tetra- and pentapeptides like the opioids leucine enkephalin (Tyr-Gly-Gly-Phe-Leu) and methionine enkephalin (Tyr-Gly-Gly_Phe-Met) across the cell membrane. This Saccharomyces cerevisiae (strain ATCC 204508 / S288c) (Baker's yeast) protein is Oligopeptide transporter 1 (OPT1).